Consider the following 152-residue polypeptide: Aspartate carbamoyltransferase regulatory chain (152 aa).

Zn(2+) is bound by residues Cys108, Cys113, Cys136, and Cys139.

It belongs to the PyrI family. As to quaternary structure, contains catalytic and regulatory chains. Zn(2+) serves as cofactor.

In terms of biological role, involved in allosteric regulation of aspartate carbamoyltransferase. The polypeptide is Aspartate carbamoyltransferase regulatory chain (Thermococcus kodakarensis (strain ATCC BAA-918 / JCM 12380 / KOD1) (Pyrococcus kodakaraensis (strain KOD1))).